A 217-amino-acid polypeptide reads, in one-letter code: Large ribosomal subunit protein uL3 (217 aa).

This sequence belongs to the universal ribosomal protein uL3 family. Part of the 50S ribosomal subunit. Forms a cluster with proteins L14 and L19.

Functionally, one of the primary rRNA binding proteins, it binds directly near the 3'-end of the 23S rRNA, where it nucleates assembly of the 50S subunit. This chain is Large ribosomal subunit protein uL3, found in Mycobacterium sp. (strain KMS).